The sequence spans 342 residues: Small ribosomal subunit protein uS2 (342 aa).

The disordered stretch occupies residues 235–283 (EENAPFEQDEPRKPSQKPKQNRPENKPRFDKQAPRAAAKPEVKAEVKPE). Residues 255 to 283 (NRPENKPRFDKQAPRAAAKPEVKAEVKPE) show a composition bias toward basic and acidic residues.

This sequence belongs to the universal ribosomal protein uS2 family.

The chain is Small ribosomal subunit protein uS2 from Acholeplasma laidlawii (strain PG-8A).